A 104-amino-acid chain; its full sequence is Large ribosomal subunit protein uL24 (104 aa).

The protein belongs to the universal ribosomal protein uL24 family. Part of the 50S ribosomal subunit.

Its function is as follows. One of two assembly initiator proteins, it binds directly to the 5'-end of the 23S rRNA, where it nucleates assembly of the 50S subunit. One of the proteins that surrounds the polypeptide exit tunnel on the outside of the subunit. The chain is Large ribosomal subunit protein uL24 from Proteus mirabilis (strain HI4320).